The primary structure comprises 192 residues: uncharacterized protein (192 aa).

The segment at 17–73 (MLRGSGKKPIQRLAKAPAATASSKTSEWRATTAYGFLPAGGDVRPHSPRYESQGVLS) is disordered. Positions 30 to 41 (AKAPAATASSKT) are enriched in low complexity.

This is an uncharacterized protein from Sinorhizobium fredii (strain NBRC 101917 / NGR234).